The sequence spans 209 residues: NADH-ubiquinone oxidoreductase subunit 9 (209 aa).

The protein belongs to the complex I 30 kDa subunit family. Complex I is composed of about 30 different subunits.

The protein localises to the mitochondrion inner membrane. The catalysed reaction is a ubiquinone + NADH + 5 H(+)(in) = a ubiquinol + NAD(+) + 4 H(+)(out). Functionally, core subunit of the mitochondrial membrane respiratory chain NADH dehydrogenase (Complex I) that is believed to belong to the minimal assembly required for catalysis. Complex I functions in the transfer of electrons from NADH to the respiratory chain. The immediate electron acceptor for the enzyme is believed to be ubiquinone. This chain is NADH-ubiquinone oxidoreductase subunit 9 (NAD9), found in Paramecium primaurelia.